Reading from the N-terminus, the 546-residue chain is Calcitonin receptor-like protein 1 (546 aa).

Residues 1-171 (MADATSPFNV…EVARNARKLE (171 aa)) lie on the Cytoplasmic side of the membrane. Residues 172 to 192 (FVGLGLSLVSLILAISIFSYF) traverse the membrane as a helical segment. Over 193 to 205 (RRLRVFRNLLHLH) the chain is Extracellular. A helical membrane pass occupies residues 206–226 (LMIAMLMVVILRLVLYIDLIF). Over 227–251 (TGENGPHTNSAEGKTINTMPIVCEG) the chain is Cytoplasmic. The helical transmembrane segment at 252–272 (MFFFLEYFKTVTFCWMFLEGI) threads the bilayer. Topologically, residues 273 to 292 (YLNNQIVFGFFNSEPKLLPY) are extracellular. Residues 293 to 313 (FIAGYGIPLVHTMLWLLVVLI) traverse the membrane as a helical segment. Residues 314 to 333 (KKDFKVERCLGSYYLEPEFW) are Cytoplasmic-facing. A helical membrane pass occupies residues 334-354 (ILDGPRMAELVINLFFICNVI). At 355–377 (RVLYSKVRESNNTSEAGLKKSVK) the chain is on the extracellular side. N365 and N366 each carry an N-linked (GlcNAc...) asparagine glycan. The chain crosses the membrane as a helical span at residues 378 to 398 (AAMMLLPLLGVPNIMQTIPFA). Residues 399–403 (PTRDN) lie on the Cytoplasmic side of the membrane. The helical transmembrane segment at 404-424 (IMVFAVWTYTASFTYMYQGLM) threads the bilayer. At 425-546 (VASIYCFTNK…EGSNRSTKSP (122 aa)) the chain is on the extracellular side. Residues N472 and N476 are each glycosylated (N-linked (GlcNAc...) asparagine). The interval 472–546 (NGTANASAPQ…EGSNRSTKSP (75 aa)) is disordered. Positions 473–485 (GTANASAPQTNNA) are enriched in polar residues. Residues 500-520 (KGSDDSTTKLMKDAVMEEEKN) show a composition bias toward basic and acidic residues. N-linked (GlcNAc...) asparagine glycosylation occurs at N540.

Belongs to the G-protein coupled receptor 2 family. In terms of tissue distribution, expression was observed in the mechanosensory neuron pairs PLM, ALM, FLP, OLQD, and OLQV, the chemosensory neurons PHA, PHB, RMEV, the ring motor neurons RMED, and the pharyngeal interneuron pair I1. Expression in sensory neurons PHA, PQR and URY are responsible for mate searching behavior. Expressed in AIY, RIM, RIA, and other neurons.

It localises to the cell membrane. In terms of biological role, G-protein coupled receptor for PDF neuropeptides. Plays a role in responses to environmental signals, including chemicals and touch, and in modulating locomotory behaviors. Capable of transducing signals via an adenylate cyclase acy-1 cAMP-dependent pathway. Required to regulate the sex-specific expression of TGFbeta-like daf-7 in the ASJ chemosensory neurons, perhaps acting via acy-1. Involved in modulating mate searching behavior independent of nutritional status. In the presence of food, plays a role in initiating and extending exploratory roaming behavior, perhaps acting in AIY, RIM, RIA, and other neurons, in opposition to 5-hydroxytryptamine (serotonin) signaling. Involved in mediating arousal from the sleep-like state called lethargus, which occurs during molting between larval and adult stages, in part by regulating touch sensitivity. May play a role in circadian rhythms of locomotor activity. Functionally, G-protein coupled receptor which is activated by neuropeptides PDF-1 and PDF-2. Probably acts through the G-alpha(s) type of G proteins to elevate cAMP levels. G-protein coupled receptor which is activated by neuropeptides PDF-1 and PDF-2; however, activation is lower compared to isoforms a and b. Probably inhibits cAMP levels through the G-alpha(i/o) type of G proteins. The polypeptide is Calcitonin receptor-like protein 1 (pdfr-1) (Caenorhabditis elegans).